Reading from the N-terminus, the 249-residue chain is 2,3,4,5-tetrahydropyridine-2,6-dicarboxylate N-acetyltransferase (249 aa).

The protein belongs to the transferase hexapeptide repeat family. DapH subfamily.

The catalysed reaction is (S)-2,3,4,5-tetrahydrodipicolinate + acetyl-CoA + H2O = L-2-acetamido-6-oxoheptanedioate + CoA. The protein operates within amino-acid biosynthesis; L-lysine biosynthesis via DAP pathway; LL-2,6-diaminopimelate from (S)-tetrahydrodipicolinate (acetylase route): step 1/3. In terms of biological role, catalyzes the transfer of an acetyl group from acetyl-CoA to tetrahydrodipicolinate. This chain is 2,3,4,5-tetrahydropyridine-2,6-dicarboxylate N-acetyltransferase, found in Fervidobacterium nodosum (strain ATCC 35602 / DSM 5306 / Rt17-B1).